A 238-amino-acid polypeptide reads, in one-letter code: NAD-dependent protein deacylase (238 aa).

The Deacetylase sirtuin-type domain occupies 1-237 (MRGIMKVFVL…PAWVERLLAR (237 aa)). An NAD(+)-binding site is contributed by 12–31 (GAGVSAESGLGTFRDKDGVW). Substrate-binding residues include Tyr-56 and Arg-59. 94 to 97 (QNVD) contributes to the NAD(+) binding site. The active-site Proton acceptor is His-112. 4 residues coordinate Zn(2+): Cys-120, Cys-123, Cys-139, and Cys-142. Residues 179–181 (GTS), 205–207 (NLE), and Ala-223 each bind NAD(+).

It belongs to the sirtuin family. Class III subfamily. The cofactor is Zn(2+).

It is found in the cytoplasm. The enzyme catalyses N(6)-acetyl-L-lysyl-[protein] + NAD(+) + H2O = 2''-O-acetyl-ADP-D-ribose + nicotinamide + L-lysyl-[protein]. It catalyses the reaction N(6)-succinyl-L-lysyl-[protein] + NAD(+) + H2O = 2''-O-succinyl-ADP-D-ribose + nicotinamide + L-lysyl-[protein]. In terms of biological role, NAD-dependent lysine deacetylase and desuccinylase that specifically removes acetyl and succinyl groups on target proteins. Modulates the activities of several proteins which are inactive in their acylated form. The sequence is that of NAD-dependent protein deacylase from Caulobacter vibrioides (strain ATCC 19089 / CIP 103742 / CB 15) (Caulobacter crescentus).